The sequence spans 100 residues: Small ribosomal subunit protein uS14c (100 aa).

The protein belongs to the universal ribosomal protein uS14 family. In terms of assembly, part of the 30S ribosomal subunit.

It localises to the plastid. The protein resides in the chloroplast. Functionally, binds 16S rRNA, required for the assembly of 30S particles. This chain is Small ribosomal subunit protein uS14c, found in Illicium oligandrum (Star anise).